The following is a 365-amino-acid chain: TD and POZ domain-containing protein 3 (365 aa).

Positions 19–149 (KFCYNWTISN…EDQFTICCKV (131 aa)) constitute an MATH domain. Residues 188-250 (TDCCLLVAGH…EMMGFIYTGK (63 aa)) enclose the BTB domain.

This sequence belongs to the Tdpoz family.

The chain is TD and POZ domain-containing protein 3 from Mus musculus (Mouse).